A 189-amino-acid polypeptide reads, in one-letter code: WASH complex subunit homolog 3 (189 aa).

The stretch at 35-74 (MTEMLNNFGNKMEDILEKAEQSLDTADRKLRLMESKLAGM) forms a coiled coil. Disordered regions lie at residues 76 to 101 (LEDK…NPSS) and 150 to 189 (SEGV…SDSD). Over residues 150-165 (SEGVDPSILKRGDEPS) the composition is skewed to basic and acidic residues. A compositionally biased stretch (polar residues) spans 167-189 (PQAQTSRNYESSGESTASFSDSD). Threonine 182 is subject to Phosphothreonine.

This sequence belongs to the CCDC53 family. As to quaternary structure, probable component of the WASH complex. Component of the DHIC (ddl-1-containing hsf-1 inhibitory complex), which contains at least ddl-1, ddl-2, hsb-1 and hsf-1. Within the complex, interacts with ddl-2. Within the complex, interacts with hsb-1. Within the complex, interacts with hsf-1. Formation of the DHIC may be dependent upon the Insulin/IGF-1-like signaling (IIS) mediated pathway. In terms of processing, phosphorylated. Phosphorylation on Thr-182 may promote DHIC complex dissociation and consequently the activation of heat-shock transcription factor hsf-1. Phosphorylation is modulated by the Insulin/IGF-1-like signaling (IIS) mediated pathway. Expressed in pharynx, intestine, body wall muscles, vulva muscles, spermatheca, and several head and tail neurons.

Its function is as follows. Acts as a component of the WASH core complex that functions as a nucleation-promoting factor (NPF) at the surface of endosomes, where it recruits and activates the Arp2/3 complex to induce actin polymerization, playing a key role in the fission of tubules that serve as transport intermediates during endosome sorting. Acts as a component of the DHIC (ddl-1-containing hsf-1 inhibitory complex) which modulates lifespan by sequestering the heat-shock transcription factor hsf-1 to negatively regulate its binding to DNA and its transcriptional activity. The chain is WASH complex subunit homolog 3 (ddl-1) from Caenorhabditis elegans.